The primary structure comprises 71 residues: Protein SlyX homolog (71 aa).

The protein belongs to the SlyX family.

The chain is Protein SlyX homolog from Thioalkalivibrio sulfidiphilus (strain HL-EbGR7).